Consider the following 258-residue polypeptide: 5'-nucleotidase SurE (258 aa).

A divalent metal cation-binding residues include D8, D9, S39, and N95.

It belongs to the SurE nucleotidase family. Requires a divalent metal cation as cofactor.

The protein resides in the cytoplasm. The enzyme catalyses a ribonucleoside 5'-phosphate + H2O = a ribonucleoside + phosphate. In terms of biological role, nucleotidase that shows phosphatase activity on nucleoside 5'-monophosphates. The polypeptide is 5'-nucleotidase SurE (Methanobrevibacter smithii (strain ATCC 35061 / DSM 861 / OCM 144 / PS)).